The following is a 169-amino-acid chain: NAD(P)H-quinone oxidoreductase subunit J, chloroplastic (169 aa).

The protein belongs to the complex I 30 kDa subunit family. As to quaternary structure, NDH is composed of at least 16 different subunits, 5 of which are encoded in the nucleus.

The protein resides in the plastid. It localises to the chloroplast thylakoid membrane. The enzyme catalyses a plastoquinone + NADH + (n+1) H(+)(in) = a plastoquinol + NAD(+) + n H(+)(out). The catalysed reaction is a plastoquinone + NADPH + (n+1) H(+)(in) = a plastoquinol + NADP(+) + n H(+)(out). Its function is as follows. NDH shuttles electrons from NAD(P)H:plastoquinone, via FMN and iron-sulfur (Fe-S) centers, to quinones in the photosynthetic chain and possibly in a chloroplast respiratory chain. The immediate electron acceptor for the enzyme in this species is believed to be plastoquinone. Couples the redox reaction to proton translocation, and thus conserves the redox energy in a proton gradient. The sequence is that of NAD(P)H-quinone oxidoreductase subunit J, chloroplastic from Zygnema circumcarinatum (Green alga).